The following is a 541-amino-acid chain: 2-succinyl-5-enolpyruvyl-6-hydroxy-3-cyclohexene-1-carboxylate synthase (541 aa).

This sequence belongs to the TPP enzyme family. MenD subfamily. In terms of assembly, homodimer. Mg(2+) is required as a cofactor. Mn(2+) serves as cofactor. The cofactor is thiamine diphosphate.

The enzyme catalyses isochorismate + 2-oxoglutarate + H(+) = 5-enolpyruvoyl-6-hydroxy-2-succinyl-cyclohex-3-ene-1-carboxylate + CO2. The protein operates within quinol/quinone metabolism; 1,4-dihydroxy-2-naphthoate biosynthesis; 1,4-dihydroxy-2-naphthoate from chorismate: step 2/7. Its pathway is quinol/quinone metabolism; menaquinone biosynthesis. Its function is as follows. Catalyzes the thiamine diphosphate-dependent decarboxylation of 2-oxoglutarate and the subsequent addition of the resulting succinic semialdehyde-thiamine pyrophosphate anion to isochorismate to yield 2-succinyl-5-enolpyruvyl-6-hydroxy-3-cyclohexene-1-carboxylate (SEPHCHC). This chain is 2-succinyl-5-enolpyruvyl-6-hydroxy-3-cyclohexene-1-carboxylate synthase, found in Leuconostoc citreum (strain KM20).